A 415-amino-acid polypeptide reads, in one-letter code: Gamma-glutamyl phosphate reductase (415 aa).

This sequence belongs to the gamma-glutamyl phosphate reductase family.

The protein resides in the cytoplasm. The catalysed reaction is L-glutamate 5-semialdehyde + phosphate + NADP(+) = L-glutamyl 5-phosphate + NADPH + H(+). It participates in amino-acid biosynthesis; L-proline biosynthesis; L-glutamate 5-semialdehyde from L-glutamate: step 2/2. Its function is as follows. Catalyzes the NADPH-dependent reduction of L-glutamate 5-phosphate into L-glutamate 5-semialdehyde and phosphate. The product spontaneously undergoes cyclization to form 1-pyrroline-5-carboxylate. The protein is Gamma-glutamyl phosphate reductase of Bacillus velezensis (strain DSM 23117 / BGSC 10A6 / LMG 26770 / FZB42) (Bacillus amyloliquefaciens subsp. plantarum).